Here is a 253-residue protein sequence, read N- to C-terminus: Precorrin-4 C(11)-methyltransferase (253 aa).

The protein belongs to the precorrin methyltransferase family.

It carries out the reaction precorrin-4 + S-adenosyl-L-methionine = precorrin-5 + S-adenosyl-L-homocysteine. It functions in the pathway cofactor biosynthesis; adenosylcobalamin biosynthesis; cob(II)yrinate a,c-diamide from precorrin-2 (aerobic route): step 4/10. Its function is as follows. Catalyzes the methylation of C-11 in precorrin-4 to form precorrin-5. The polypeptide is Precorrin-4 C(11)-methyltransferase (cobM) (Sinorhizobium sp).